We begin with the raw amino-acid sequence, 98 residues long: Mu-type opioid receptor (98 aa).

The Cytoplasmic segment spans residues 1 to 9; it reads YTKMKTATN. A helical transmembrane segment spans residues 10–34; the sequence is IYIFNLALADALATSTLPFQSVNYL. The Extracellular portion of the chain corresponds to 35-45; that stretch reads MGTWPFGTILC. A helical transmembrane segment spans residues 46-68; the sequence is KIVISIDYYNMFTSIFTLCTMSV. Over 69-88 the chain is Cytoplasmic; sequence DRYIAVCHPVKALDFRTPRN. Residue Y71 is modified to Phosphotyrosine. A helical transmembrane segment spans residues 89–98; the sequence is AKTVNVCNWI.

It belongs to the G-protein coupled receptor 1 family. As to quaternary structure, forms homooligomers and heterooligomers with other GPCRs, such as OPRD1, OPRK1, OPRL1, NPFFR2, ADRA2A, SSTR2, CNR1 and CCR5 (probably in dimeric forms). Interacts with heterotrimeric G proteins; interaction with a heterotrimeric complex containing GNAI1, GNB1 and GNG2 stabilizes the active conformation of the receptor and increases its affinity for endomorphin-2, the synthetic opioid peptide DAMGO and for morphinan agonists. Interacts with PPL; the interaction disrupts agonist-mediated G-protein activation. Interacts (via C-terminus) with DNAJB4 (via C-terminus). Interacts with calmodulin; the interaction inhibits the constitutive activity of OPRM1; it abolishes basal and attenuates agonist-stimulated G-protein coupling. Interacts with FLNA, PLD2, RANBP9 and WLS and GPM6A. Interacts with RTP4. Interacts with SYP and GNAS. Interacts with RGS9, RGS17, RGS20, RGS4, PPP1R9B and HINT1. In terms of processing, phosphorylated. Differentially phosphorylated in basal and agonist-induced conditions. Agonist-mediated phosphorylation modulates receptor internalization. Phosphorylated by GRK2 in a agonist-dependent manner. Phosphorylated on tyrosine residues; the phosphorylation is involved in agonist-induced G-protein-independent receptor down-regulation. Phosphorylated. Differentially phosphorylated in basal and agonist-induced conditions. Agonist-mediated phosphorylation modulates receptor internalization. Phosphorylated by GRK2 in a agonist-dependent manner. Phosphorylated on tyrosine residues; the phosphorylation is involved in agonist-induced G-protein-independent receptor down-regulation. Post-translationally, ubiquitinated. A basal ubiquitination seems not to be related to degradation. Ubiquitination is increased upon formation of OPRM1:OPRD1 oligomers leading to proteasomal degradation; the ubiquitination is diminished by RTP4.

Its subcellular location is the cell membrane. The protein resides in the cell projection. It is found in the axon. The protein localises to the perikaryon. It localises to the dendrite. Its subcellular location is the endosome. Its function is as follows. Receptor for endogenous opioids such as beta-endorphin and endomorphin. Receptor for natural and synthetic opioids including morphine, heroin, DAMGO, fentanyl, etorphine, buprenorphin and methadone. Also activated by enkephalin peptides, such as Met-enkephalin or Met-enkephalin-Arg-Phe, with higher affinity for Met-enkephalin-Arg-Phe. Agonist binding to the receptor induces coupling to an inactive GDP-bound heterotrimeric G-protein complex and subsequent exchange of GDP for GTP in the G-protein alpha subunit leading to dissociation of the G-protein complex with the free GTP-bound G-protein alpha and the G-protein beta-gamma dimer activating downstream cellular effectors. The agonist- and cell type-specific activity is predominantly coupled to pertussis toxin-sensitive G(i) and G(o) G alpha proteins, GNAI1, GNAI2, GNAI3 and GNAO1, and to a lesser extent to pertussis toxin-insensitive G alpha proteins GNAZ and GNA15. They mediate an array of downstream cellular responses, including inhibition of adenylate cyclase activity and both N-type and L-type calcium channels, activation of inward rectifying potassium channels, mitogen-activated protein kinase (MAPK), phospholipase C (PLC), phosphoinositide/protein kinase (PKC), phosphoinositide 3-kinase (PI3K) and regulation of NF-kappa-B. Also couples to adenylate cyclase stimulatory G alpha proteins. The selective temporal coupling to G-proteins and subsequent signaling can be regulated by RGSZ proteins, such as RGS9, RGS17 and RGS4. Phosphorylation by members of the GPRK subfamily of Ser/Thr protein kinases and association with beta-arrestins is involved in short-term receptor desensitization. Beta-arrestins associate with the GPRK-phosphorylated receptor and uncouple it from the G-protein thus terminating signal transduction. The phosphorylated receptor is internalized through endocytosis via clathrin-coated pits which involves beta-arrestins. The activation of the ERK pathway occurs either in a G-protein-dependent or a beta-arrestin-dependent manner and is regulated by agonist-specific receptor phosphorylation. Acts as a class A G-protein coupled receptor (GPCR) which dissociates from beta-arrestin at or near the plasma membrane and undergoes rapid recycling. Receptor down-regulation pathways are varying with the agonist and occur dependent or independent of G-protein coupling. Endogenous ligands induce rapid desensitization, endocytosis and recycling. Heterooligomerization with other GPCRs can modulate agonist binding, signaling and trafficking properties. Involved in neurogenesis. The protein is Mu-type opioid receptor (OPRM1) of Cavia porcellus (Guinea pig).